The chain runs to 409 residues: uncharacterized protein (409 aa).

The N-terminal stretch at 1–26 (MKKELLASLVLCLSLSPLVSTNEVFA) is a signal peptide.

This is an uncharacterized protein from Bacillus subtilis (strain 168).